The primary structure comprises 121 residues: Small ribosomal subunit protein bS6 (121 aa).

The tract at residues 102–121 is disordered; the sequence is MMRNVEREEARKAQQQEYAA. The segment covering 105–115 has biased composition (basic and acidic residues); sequence NVEREEARKAQ.

This sequence belongs to the bacterial ribosomal protein bS6 family.

Functionally, binds together with bS18 to 16S ribosomal RNA. This is Small ribosomal subunit protein bS6 from Polaromonas sp. (strain JS666 / ATCC BAA-500).